The sequence spans 377 residues: Lactosylceramide 1,3-N-acetyl-beta-D-glucosaminyltransferase A (377 aa).

The Cytoplasmic portion of the chain corresponds to 1 to 12; it reads MLISARRLRRCQ. A helical; Signal-anchor for type II membrane protein transmembrane segment spans residues 13-30; it reads FLQLLASCFVLSLMALLV. Topologically, residues 31-377 are lumenal; the sequence is QEDNSLISHV…DTYPCSAAWS (347 aa). 3 N-linked (GlcNAc...) asparagine glycosylation sites follow: Asn-56, Asn-167, and Asn-275.

The protein belongs to the glycosyltransferase 31 family.

Its subcellular location is the golgi apparatus membrane. The enzyme catalyses a beta-D-Gal-(1-&gt;4)-beta-D-Glc-(1&lt;-&gt;1)-Cer(d18:1(4E)) + UDP-N-acetyl-alpha-D-glucosamine = a beta-D-GlcNAc-(1-&gt;3)-beta-D-Gal-(1-&gt;4)-beta-D-Glc-(1&lt;-&gt;1)-Cer(d18:1(4E)) + UDP + H(+). The catalysed reaction is a neolactoside nLc4Cer(d18:1(4E)) + UDP-N-acetyl-alpha-D-glucosamine = a neolactoside IV(3)-beta-GlcNAc-nLc4Cer(d18:1(4E)) + UDP + H(+). It functions in the pathway protein modification; protein glycosylation. Its function is as follows. Beta-1,3-N-acetylglucosaminyltransferase that plays a key role in the synthesis of lacto- or neolacto-series carbohydrate chains on glycolipids. The chain is Lactosylceramide 1,3-N-acetyl-beta-D-glucosaminyltransferase A (b3gnt5-a) from Xenopus laevis (African clawed frog).